Reading from the N-terminus, the 940-residue chain is Inter-alpha-trypsin inhibitor heavy chain H5 (940 aa).

Positions 1–16 (MLLLLGLCLGLSQCVG) are cleaved as a signal peptide. Residues 35-161 (VPRQVRLLQR…KAAFFLSYEE (127 aa)) enclose the VIT domain. N-linked (GlcNAc...) asparagine glycosylation is found at N97 and N127. 2 disordered regions span residues 117-136 (KSGD…NGEK) and 208-227 (SRQR…PSTV). The N-linked (GlcNAc...) asparagine glycan is linked to N231. The region spanning 295–478 (NVVFVLDSSA…SQLIGFYDEI (184 aa)) is the VWFA domain. Residues 405–432 (DGWEAHGRGDAHPQDPQQHPRGRPRPSL) are disordered. Basic and acidic residues predominate over residues 407–417 (WEAHGRGDAHP). Residue N508 is glycosylated (N-linked (GlcNAc...) asparagine). The segment at 541–571 (PKTDVPVGPQKAGKDVTGSPRPGGDGERNPN) is disordered. Residues N774, N793, and N860 are each glycosylated (N-linked (GlcNAc...) asparagine).

The protein belongs to the ITIH family.

The protein resides in the secreted. In terms of biological role, may act as a tumor suppressor. In Pongo abelii (Sumatran orangutan), this protein is Inter-alpha-trypsin inhibitor heavy chain H5 (ITIH5).